Consider the following 137-residue polypeptide: Large ribosomal subunit protein uL16 (137 aa).

This sequence belongs to the universal ribosomal protein uL16 family. As to quaternary structure, part of the 50S ribosomal subunit.

Functionally, binds 23S rRNA and is also seen to make contacts with the A and possibly P site tRNAs. The chain is Large ribosomal subunit protein uL16 from Azorhizobium caulinodans (strain ATCC 43989 / DSM 5975 / JCM 20966 / LMG 6465 / NBRC 14845 / NCIMB 13405 / ORS 571).